Here is a 378-residue protein sequence, read N- to C-terminus: Succinyl-diaminopimelate desuccinylase (378 aa).

Histidine 67 provides a ligand contact to Zn(2+). Residue aspartate 69 is part of the active site. Aspartate 100 serves as a coordination point for Zn(2+). The Proton acceptor role is filled by glutamate 134. The Zn(2+) site is built by glutamate 135, glutamate 163, and histidine 349.

It belongs to the peptidase M20A family. DapE subfamily. In terms of assembly, homodimer. Zn(2+) is required as a cofactor. The cofactor is Co(2+).

The enzyme catalyses N-succinyl-(2S,6S)-2,6-diaminopimelate + H2O = (2S,6S)-2,6-diaminopimelate + succinate. The protein operates within amino-acid biosynthesis; L-lysine biosynthesis via DAP pathway; LL-2,6-diaminopimelate from (S)-tetrahydrodipicolinate (succinylase route): step 3/3. In terms of biological role, catalyzes the hydrolysis of N-succinyl-L,L-diaminopimelic acid (SDAP), forming succinate and LL-2,6-diaminopimelate (DAP), an intermediate involved in the bacterial biosynthesis of lysine and meso-diaminopimelic acid, an essential component of bacterial cell walls. In Nitrosospira multiformis (strain ATCC 25196 / NCIMB 11849 / C 71), this protein is Succinyl-diaminopimelate desuccinylase.